Reading from the N-terminus, the 316-residue chain is Protein C4 (316 aa).

The protein belongs to the poxviridae OPG031 protein family.

It localises to the host cytoplasm. It is found in the host nucleus. Plays a role in the inhibition of host NF-kappa-B activation. Mechanistically, blocks the subunit p65/RELA translocation into the host nucleus. The polypeptide is Protein C4 (OPG031) (Vaccinia virus (strain Western Reserve) (VACV)).